The sequence spans 344 residues: Meiotic recombination protein DMC1 homolog B (344 aa).

An ATP-binding site is contributed by glycine 133–threonine 140. Arginine 235 contacts dsDNA. SsDNA is bound by residues arginine 235, phenylalanine 238, arginine 241, arginine 247, and arginine 315. DsDNA is bound by residues arginine 241 and arginine 247.

Belongs to the RecA family. DMC1 subfamily. In terms of tissue distribution, highly expressed in spikelets. Expressed in meiotic young panicles.

The protein localises to the nucleus. In terms of biological role, recombinase that may participate in meiotic recombination, specifically in homologous strand assimilation, which is required for the resolution of meiotic double-strand breaks. Exhibits DNA-dependent ATPase activity when bound to single-stranded DNA (ssDNA). Mediates renaturation of homologous complementary strands as well as assimilation of single strands into homologous supercoiled duplexes leading to D-loop formation. Binds circular single-stranded DNA (ssDNA) and circular double-stranded DNA (dsDNA) in vitro. Catalyzes DNA homologous renaturation and DNA strand exchange. The rates of these activities are dependent on the state of ATP hydrolysis. Forms helical filaments along ssDNA and dsDNA, and promotes strand exchange between ssDNA and dsDNA with long DNA substrates of several thousand base pairs. The presence of the replication protein A is not required for this activity. Seems to be required for homologous pairing and subsequent chromosome segregation during male meiosis. May be not directly required for homologous pairing during male meiosis. Required for synaptonemal complex assembly and crossover formation. Functions redundantly with DMC1A. The sequence is that of Meiotic recombination protein DMC1 homolog B from Oryza sativa subsp. japonica (Rice).